A 215-amino-acid chain; its full sequence is Small ribosomal subunit protein uS3 (215 aa).

Residues 38–106 (LRAFLKKKLF…EVLIDIQEIR (69 aa)) form the KH type-2 domain.

Belongs to the universal ribosomal protein uS3 family. As to quaternary structure, part of the 30S ribosomal subunit. Forms a tight complex with proteins S10 and S14.

Functionally, binds the lower part of the 30S subunit head. Binds mRNA in the 70S ribosome, positioning it for translation. The chain is Small ribosomal subunit protein uS3 from Desulforapulum autotrophicum (strain ATCC 43914 / DSM 3382 / VKM B-1955 / HRM2) (Desulfobacterium autotrophicum).